We begin with the raw amino-acid sequence, 249 residues long: 2-C-methyl-D-erythritol 4-phosphate cytidylyltransferase (249 aa).

It belongs to the IspD/TarI cytidylyltransferase family. IspD subfamily.

The enzyme catalyses 2-C-methyl-D-erythritol 4-phosphate + CTP + H(+) = 4-CDP-2-C-methyl-D-erythritol + diphosphate. Its pathway is isoprenoid biosynthesis; isopentenyl diphosphate biosynthesis via DXP pathway; isopentenyl diphosphate from 1-deoxy-D-xylulose 5-phosphate: step 2/6. Functionally, catalyzes the formation of 4-diphosphocytidyl-2-C-methyl-D-erythritol from CTP and 2-C-methyl-D-erythritol 4-phosphate (MEP). In Thermobifida fusca (strain YX), this protein is 2-C-methyl-D-erythritol 4-phosphate cytidylyltransferase.